The chain runs to 426 residues: Serine hydroxymethyltransferase (426 aa).

Residues L115 and 119–121 contribute to the (6S)-5,6,7,8-tetrahydrofolate site; that span reads GHI. An N6-(pyridoxal phosphate)lysine modification is found at K225.

This sequence belongs to the SHMT family. As to quaternary structure, homodimer. The cofactor is pyridoxal 5'-phosphate.

The protein resides in the cytoplasm. It participates in amino-acid biosynthesis; glycine biosynthesis; glycine from L-serine: step 1/1. Functionally, catalyzes the reversible interconversion of serine and glycine with a modified folate serving as the one-carbon carrier. Also exhibits a pteridine-independent aldolase activity toward beta-hydroxyamino acids, producing glycine and aldehydes, via a retro-aldol mechanism. This Thermoplasma volcanium (strain ATCC 51530 / DSM 4299 / JCM 9571 / NBRC 15438 / GSS1) protein is Serine hydroxymethyltransferase.